A 173-amino-acid chain; its full sequence is Nicotinamide-nucleotide adenylyltransferase (173 aa).

The protein belongs to the archaeal NMN adenylyltransferase family.

The protein localises to the cytoplasm. It catalyses the reaction beta-nicotinamide D-ribonucleotide + ATP + H(+) = diphosphate + NAD(+). It functions in the pathway cofactor biosynthesis; NAD(+) biosynthesis; NAD(+) from nicotinamide D-ribonucleotide: step 1/1. This Methanolobus tindarius protein is Nicotinamide-nucleotide adenylyltransferase (ffdC).